The following is a 289-amino-acid chain: Aquaporin PIP1-1 (289 aa).

Positions M1–E36 are disordered. A run of 2 helical transmembrane segments spans residues I58–V78 and I93–H115. Residues N117–A119 carry the NPA 1 motif. 3 helical membrane passes run I136–F156, G178–A198, and I212–I232. The NPA 2 signature appears at N238–A240. The chain crosses the membrane as a helical span at residues I260–I280.

The protein belongs to the MIP/aquaporin (TC 1.A.8) family. PIP (TC 1.A.8.11) subfamily. As to expression, expressed in roots, leaves and anthers.

It localises to the cell membrane. Functionally, may function as water channel to facilitate the transport of water across cell membrane. This is Aquaporin PIP1-1 (PIP1-1) from Oryza sativa subsp. japonica (Rice).